A 201-amino-acid polypeptide reads, in one-letter code: Ribonuclease HII (201 aa).

Residues 12–201 (DLVAGVDEVG…VRELLDASVE (190 aa)) form the RNase H type-2 domain. A divalent metal cation is bound by residues Asp-18, Glu-19, and Asp-110.

The protein belongs to the RNase HII family. The cofactor is Mn(2+). Requires Mg(2+) as cofactor.

It is found in the cytoplasm. It catalyses the reaction Endonucleolytic cleavage to 5'-phosphomonoester.. Endonuclease that specifically degrades the RNA of RNA-DNA hybrids. The protein is Ribonuclease HII of Pseudomonas paraeruginosa (strain DSM 24068 / PA7) (Pseudomonas aeruginosa (strain PA7)).